The sequence spans 348 residues: MDNSSVCPPNATVCEGDSCVVPESNFNAILNTVMSTVLTILLAMVMFSMGCNVEVHKFLGHIKRPWGIFVGFLCQFGIMPLTGFILSVASGILPVQAVVVLIMGCCPGGTGSNILAYWIDGDMDLSVSMTTCSTLLALGMMPLCLFVYTKMWVDSGTIVIPYDSIGISLVALVIPVSFGMFVNHKWPQKAKIILKIGSITGVILIVLIAVIGGILYQSAWIIEPKLWIIGTIFPIAGYSLGFFLARLAGQPWYRCRTVALETGMQNTQLCSTIVQLSFSPEDLNLVFTFPLIYTVFQLVFAAVILGIYVTYRKCYGKNDAEFLEKTDNEMDSRPSFDETNKGFQPDEK.

The Extracellular portion of the chain corresponds to 1–28; it reads MDNSSVCPPNATVCEGDSCVVPESNFNA. N-linked (GlcNAc...) asparagine glycosylation is found at asparagine 3 and asparagine 10. A helical membrane pass occupies residues 29-49; it reads ILNTVMSTVLTILLAMVMFSM. The Cytoplasmic segment spans residues 50-87; the sequence is GCNVEVHKFLGHIKRPWGIFVGFLCQFGIMPLTGFILS. A helical transmembrane segment spans residues 88-108; that stretch reads VASGILPVQAVVVLIMGCCPG. The Extracellular segment spans residues 109-126; it reads GTGSNILAYWIDGDMDLS. Residues 127–147 traverse the membrane as a helical segment; that stretch reads VSMTTCSTLLALGMMPLCLFV. The Cytoplasmic segment spans residues 148 to 157; that stretch reads YTKMWVDSGT. Residues 158-178 form a helical membrane-spanning segment; sequence IVIPYDSIGISLVALVIPVSF. Over 179-195 the chain is Extracellular; sequence GMFVNHKWPQKAKIILK. The chain crosses the membrane as a helical span at residues 196 to 216; it reads IGSITGVILIVLIAVIGGILY. The Cytoplasmic segment spans residues 217-224; that stretch reads QSAWIIEP. A helical transmembrane segment spans residues 225–245; that stretch reads KLWIIGTIFPIAGYSLGFFLA. Residues 246–284 lie on the Extracellular side of the membrane; sequence RLAGQPWYRCRTVALETGMQNTQLCSTIVQLSFSPEDLN. Residues 285–305 traverse the membrane as a helical segment; sequence LVFTFPLIYTVFQLVFAAVIL. The Cytoplasmic portion of the chain corresponds to 306 to 348; it reads GIYVTYRKCYGKNDAEFLEKTDNEMDSRPSFDETNKGFQPDEK. The tract at residues 328–348 is disordered; the sequence is NEMDSRPSFDETNKGFQPDEK. A Phosphoserine modification is found at serine 335.

This sequence belongs to the bile acid:sodium symporter (BASS) (TC 2.A.28) family. Monomer and homodimer. In terms of tissue distribution, expressed in ileum.

The protein localises to the membrane. The catalysed reaction is taurocholate(out) + 2 Na(+)(out) = taurocholate(in) + 2 Na(+)(in). It carries out the reaction cholate(out) + 2 Na(+)(out) = cholate(in) + 2 Na(+)(in). The enzyme catalyses taurochenodeoxycholate(out) + 2 Na(+)(out) = taurochenodeoxycholate(in) + 2 Na(+)(in). It catalyses the reaction tauroursodeoxycholate(out) + 2 Na(+)(out) = tauroursodeoxycholate(in) + 2 Na(+)(in). The catalysed reaction is glycocholate(out) + 2 Na(+)(out) = glycocholate(in) + 2 Na(+)(in). It carries out the reaction tauronorcholate(out) + 2 Na(+)(out) = tauronorcholate(in) + 2 Na(+)(in). The enzyme catalyses tauroallocholate(out) + 2 Na(+)(out) = tauroallocholate(in) + 2 Na(+)(in). It catalyses the reaction taurodeoxycholate(out) + 2 Na(+)(out) = taurodeoxycholate(in) + 2 Na(+)(in). The catalysed reaction is tauro-beta-muricholate(out) + 2 Na(+)(out) = tauro-beta-muricholate(in) + 2 Na(+)(in). Plays a critical role in the sodium-dependent reabsorption of bile acids from the lumen of the small intestine. Transports various bile acids, unconjugated or conjugated, such as cholate and taurocholate. Also responsible for bile acid transport in the renal proximal tubules, a salvage mechanism that helps conserve bile acids. Works collaboratively with the Na(+)-taurocholate cotransporting polypeptide (NTCP), the organic solute transporter (OST), and the bile salt export pump (BSEP), to ensure efficacious biological recycling of bile acids during enterohepatic circulation. The protein is Ileal sodium/bile acid cotransporter (Slc10a2) of Mus musculus (Mouse).